A 57-amino-acid polypeptide reads, in one-letter code: Large ribosomal subunit protein bL32 (57 aa).

Belongs to the bacterial ribosomal protein bL32 family.

This is Large ribosomal subunit protein bL32 from Lysinibacillus sphaericus (strain C3-41).